We begin with the raw amino-acid sequence, 127 residues long: LIM domain-containing protein 2 (127 aa).

An N-acetylmethionine modification is found at Met1. Residues 1–24 are disordered; that stretch reads MFQAAGAAQATPSHDAKGGGSSTV. The 61-residue stretch at 38–98 folds into the LIM zinc-binding domain; sequence ETCAACQKTV…KPHFQQLFKS (61 aa). Zn(2+)-binding residues include Cys40, Cys43, His61, Cys64, Cys67, Cys70, Cys88, and His91.

As to quaternary structure, interacts with ILK.

The protein resides in the cytoplasm. The protein localises to the nucleus. Functionally, acts as an activator of the protein-kinase ILK, thereby regulating cell motility. This is LIM domain-containing protein 2 from Homo sapiens (Human).